We begin with the raw amino-acid sequence, 239 residues long: Probable inner membrane transporter protein TsaS (239 aa).

4 helical membrane-spanning segments follow: residues 65–85 (AIGA…WLMG), 128–148 (GLVG…IALL), 160–180 (ATVP…LFGA), and 186–206 (AHTF…VVLG).

This sequence belongs to the 4-toluene sulfonate uptake permease (TSUP) (TC 2.A.102) family. As to quaternary structure, part of a two-component transport system composed of TsaT and TsaS.

It is found in the cell inner membrane. In terms of biological role, involved in the uptake of p-toluenesulphonate (TSA). In Comamonas testosteroni (Pseudomonas testosteroni), this protein is Probable inner membrane transporter protein TsaS (tsaS).